Consider the following 109-residue polypeptide: Putative double-stranded DNA mimic protein YciU (109 aa).

Belongs to the putative dsDNA mimic protein family.

In terms of biological role, may act as a double-stranded DNA (dsDNA) mimic. Probably regulates the activity of a dsDNA-binding protein. This is Putative double-stranded DNA mimic protein YciU from Salmonella arizonae (strain ATCC BAA-731 / CDC346-86 / RSK2980).